The following is a 330-amino-acid chain: GTPase Obg (330 aa).

The region spanning 1-159 (MHFIDEVKIY…MWIHLRLKLL (159 aa)) is the Obg domain. In terms of domain architecture, OBG-type G spans 160–327 (SDVGLVGLPN…IVKLALEIIK (168 aa)). Residues 166-173 (GLPNAGKS), 191-195 (FTTLV), 212-215 (DIPG), 279-282 (NKCD), and 308-310 (STY) each bind GTP. The Mg(2+) site is built by Ser173 and Thr193.

The protein belongs to the TRAFAC class OBG-HflX-like GTPase superfamily. OBG GTPase family. Monomer. Requires Mg(2+) as cofactor.

It is found in the cytoplasm. Functionally, an essential GTPase which binds GTP, GDP and possibly (p)ppGpp with moderate affinity, with high nucleotide exchange rates and a fairly low GTP hydrolysis rate. Plays a role in control of the cell cycle, stress response, ribosome biogenesis and in those bacteria that undergo differentiation, in morphogenesis control. This chain is GTPase Obg, found in Rickettsia typhi (strain ATCC VR-144 / Wilmington).